The sequence spans 162 residues: Interleukin-15 (162 aa).

The first 29 residues, 1–29, serve as a signal peptide directing secretion; the sequence is MRISKPYLRSTSIQCYLCLLLNSHFLAEA. Residues 30–48 constitute a propeptide that is removed on maturation; that stretch reads GIHVFIFGCISAGLPKTEA. 2 cysteine pairs are disulfide-bonded: cysteine 83–cysteine 133 and cysteine 90–cysteine 136. Residues asparagine 108, asparagine 119, asparagine 127, and asparagine 143 are each glycosylated (N-linked (GlcNAc...) asparagine).

It belongs to the IL-15/IL-21 family. Expressed in many tissues including heart, spleen, lung, liver, muscle and kidney (at mRNA level). Expressed in many tissues including heart, spleen, lung, liver, muscle and kidney (at protein level).

The protein localises to the secreted. Its function is as follows. Cytokine that plays a major role in the development of inflammatory and protective immune responses to microbial invaders and parasites by modulating immune cells of both the innate and adaptive immune systems. Stimulates the proliferation of natural killer cells, T-cells and B-cells and promotes the secretion of several cytokines. In monocytes, induces the production of IL8 and monocyte chemotactic protein 1/CCL2, two chemokines that attract neutrophils and monocytes respectively to sites of infection. Unlike most cytokines, which are secreted in soluble form, IL15 is expressed in association with its high affinity IL15RA on the surface of IL15-producing cells and delivers signals to target cells that express IL2RB and IL2RG receptor subunits. Binding to its receptor triggers the phosphorylation of JAK1 and JAK3 and the recruitment and subsequent phosphorylation of signal transducer and activator of transcription-3/STAT3 and STAT5. In mast cells, induces the rapid tyrosine phosphorylation of STAT6 and thereby controls mast cell survival and release of cytokines such as IL4. In Oryctolagus cuniculus (Rabbit), this protein is Interleukin-15 (IL15).